Reading from the N-terminus, the 208-residue chain is Small ribosomal subunit protein uS3 (208 aa).

Positions 16–85 (VDEYLKNKLP…KPQIEVKQIE (70 aa)) constitute a KH type-2 domain.

It belongs to the universal ribosomal protein uS3 family. Part of the 30S ribosomal subunit.

Binds the lower part of the 30S subunit head. This is Small ribosomal subunit protein uS3 from Methanococcus aeolicus (strain ATCC BAA-1280 / DSM 17508 / OCM 812 / Nankai-3).